Here is a 353-residue protein sequence, read N- to C-terminus: S-adenosylmethionine:tRNA ribosyltransferase-isomerase (353 aa).

The protein belongs to the QueA family. As to quaternary structure, monomer.

It is found in the cytoplasm. It carries out the reaction 7-aminomethyl-7-carbaguanosine(34) in tRNA + S-adenosyl-L-methionine = epoxyqueuosine(34) in tRNA + adenine + L-methionine + 2 H(+). Its pathway is tRNA modification; tRNA-queuosine biosynthesis. Transfers and isomerizes the ribose moiety from AdoMet to the 7-aminomethyl group of 7-deazaguanine (preQ1-tRNA) to give epoxyqueuosine (oQ-tRNA). The polypeptide is S-adenosylmethionine:tRNA ribosyltransferase-isomerase (Blochmanniella floridana).